A 146-amino-acid chain; its full sequence is Hemoglobin subunit beta (146 aa).

V1 carries the post-translational modification N-acetylvaline. One can recognise a Globin domain in the interval 2-146; sequence HLSGEEKACV…VANALAHKYH (145 aa). Position 12 is a phosphothreonine (T12). The residue at position 44 (S44) is a Phosphoserine. Residue K59 is modified to N6-acetyllysine. Residue H63 participates in heme b binding. K82 is subject to N6-acetyllysine. Residue H92 participates in heme b binding. C93 is modified (S-nitrosocysteine). At K144 the chain carries N6-acetyllysine.

It belongs to the globin family. As to quaternary structure, heterotetramer of two alpha chains and two beta chains. In terms of tissue distribution, red blood cells.

Functionally, involved in oxygen transport from the lung to the various peripheral tissues. This Suncus murinus (Asian house shrew) protein is Hemoglobin subunit beta (HBB).